We begin with the raw amino-acid sequence, 816 residues long: Stemod-13(17)-ene synthase (816 aa).

Over residues 1–10 (MMLLSSSYSG) the composition is skewed to polar residues. Residues 1–24 (MMLLSSSYSGGQFPGVSPLGTRPK) form a disordered region. The Mg(2+) site is built by aspartate 553, aspartate 557, asparagine 698, threonine 702, and glutamate 706. Residues 553–557 (DDFFD) carry the DDXXD motif motif.

The protein belongs to the terpene synthase family. Requires Mg(2+) as cofactor.

It catalyses the reaction 9alpha-copalyl diphosphate = stemod-13(17)-ene + diphosphate. In terms of biological role, catalyzes the conversion of syn-copalyl diphosphate to stemodene. The sequence is that of Stemod-13(17)-ene synthase (KSL11) from Oryza sativa subsp. indica (Rice).